We begin with the raw amino-acid sequence, 118 residues long: Aspartate 1-decarboxylase 1 (118 aa).

The Schiff-base intermediate with substrate; via pyruvic acid role is filled by Ser-25. Position 25 is a pyruvic acid (Ser) (Ser-25). Residue Thr-57 participates in substrate binding. Tyr-58 (proton donor) is an active-site residue. Substrate is bound at residue 73–75 (GAA).

It belongs to the PanD family. In terms of assembly, heterooctamer of four alpha and four beta subunits. Requires pyruvate as cofactor. Post-translationally, is synthesized initially as an inactive proenzyme, which is activated by self-cleavage at a specific serine bond to produce a beta-subunit with a hydroxyl group at its C-terminus and an alpha-subunit with a pyruvoyl group at its N-terminus.

The protein localises to the cytoplasm. The catalysed reaction is L-aspartate + H(+) = beta-alanine + CO2. Its pathway is cofactor biosynthesis; (R)-pantothenate biosynthesis; beta-alanine from L-aspartate: step 1/1. Functionally, catalyzes the pyruvoyl-dependent decarboxylation of aspartate to produce beta-alanine. This is Aspartate 1-decarboxylase 1 from Gloeobacter violaceus (strain ATCC 29082 / PCC 7421).